The primary structure comprises 147 residues: Anti-sigma F factor (147 aa).

It belongs to the anti-sigma-factor family.

The enzyme catalyses L-seryl-[protein] + ATP = O-phospho-L-seryl-[protein] + ADP + H(+). The catalysed reaction is L-threonyl-[protein] + ATP = O-phospho-L-threonyl-[protein] + ADP + H(+). Its function is as follows. Binds to sigma F and blocks its ability to form an RNA polymerase holoenzyme (E-sigma F). Phosphorylates SpoIIAA on a serine residue. This phosphorylation may enable SpoIIAA to act as an anti-anti-sigma factor that counteracts SpoIIAB and thus releases sigma F from inhibition. In Priestia megaterium (Bacillus megaterium), this protein is Anti-sigma F factor.